The following is a 373-amino-acid chain: Tomoregulin-1 (373 aa).

An N-terminal signal peptide occupies residues 1-36; sequence MGAQAPLRLPAAPPLAVCGYTSVLLLFAFCLPGSGA. Residues 37 to 323 are Extracellular-facing; the sequence is SNQPAGGGGD…VPSRQKLTHV (287 aa). N-linked (GlcNAc...) asparagine glycosylation occurs at asparagine 56. The Kazal-like 1 domain maps to 91-138; it reads ACQFQCHTNYIPVCGSNGDTYQNECFLRRAACKHQKDITVVARGPCYS. Intrachain disulfides connect cysteine 92–cysteine 122, cysteine 96–cysteine 115, and cysteine 104–cysteine 136. N-linked (GlcNAc...) asparagine glycosylation occurs at asparagine 140. The segment at 140 to 162 is disordered; sequence NGSGSGEGEEEGSGAGAHRKHSK. Residues 182–230 form the Kazal-like 2 domain; it reads VCNIDCSGYSFNPVCASDGSSYNNPCFVREASCIRQEQIDIRHLGHCTD. 6 disulfides stabilise this stretch: cysteine 183-cysteine 214, cysteine 187-cysteine 207, cysteine 196-cysteine 228, cysteine 268-cysteine 281, cysteine 276-cysteine 292, and cysteine 294-cysteine 303. The 41-residue stretch at 264 to 304 folds into the EGF-like domain; that stretch reads SHMPCPENLNGYCIHGKCEFIYSTQKASCRCESGYTGQHCE. The chain crosses the membrane as a helical span at residues 324–344; that stretch reads LIAAIIGAVQIAIIVAIVMCI. Residues 345–373 are Cytoplasmic-facing; sequence TRKCPKNNRGRRQKQNLGHFTSETSSRMV. The interval 352–373 is disordered; the sequence is NRGRRQKQNLGHFTSETSSRMV. Residues 359-373 show a composition bias toward polar residues; it reads QNLGHFTSETSSRMV.

This sequence belongs to the tomoregulin family. In terms of assembly, may interact with ST14.

The protein resides in the cell membrane. In terms of biological role, neuron-specific restriction factor that prevents herpes simplex virus 1 (HHV-1) infection in the brain by blocking viral entry. Also able to restrict herpes simplex virus 2 (HHV-2) infection, although to a lesser extent. Acts by preventing the association between the viral glycoprotein D (gD) and its cell surface receptor NECTIN1, thereby inhibiting fusion of the virus and the cell membrane. Also able to prevent the association between the viral glycoprotein B (gB) and MYH9/NMMHC-IIA and MYH10/NMMHC-IIB receptors. The protein is Tomoregulin-1 (Tmeff1) of Rattus norvegicus (Rat).